Reading from the N-terminus, the 505-residue chain is Protein FAM114A2 (505 aa).

Residues 1-65 (MSDKDDIETP…KPSSDLETSK (65 aa)) form a disordered region. A compositionally biased stretch (basic and acidic residues) spans 51-63 (KRPETKPSSDLET). Phosphoserine is present on residues Ser87, Ser146, and Ser209. A coiled-coil region spans residues 268-295 (LNSLSGEELETLKVELEQLKETFSLAEF). The interval 342–366 (KSLTKPLAENEEGEKQSEAENTEQV) is disordered.

This sequence belongs to the FAM114 family.

The protein is Protein FAM114A2 (FAM114A2) of Homo sapiens (Human).